We begin with the raw amino-acid sequence, 399 residues long: MKRQEIDHIPFDLTVEILTRLPAKSLMKFKCVSKLWSSIIHNQSFIDSFYSISSTRPRFIVAFSNGSFPSDKEKRLFIFSSSHEGHESSSSVITNLDTTIPSLTVSNNLASRCISVNGFIACSLYTRFTICNPSTRQVIVLPILPSGRAPDMRSTCIGYDPVDDQFKALALISSCIPNKDSTVEHLVLTLKGDKKNYSWRQIQGNNNIPPYSPVTMRVCINGVVYYGAWTPRQSMNAVIVCFDVRSEKITFIKTPKDVVRWCNDSILMEYKGKLASIVRNRYSRFDTFDLWVLEDIEKQEWSKQTCEIPLSVWDSVENFNMSFPGINKFGEIILAPTCLSGYHLRSFYIFYYHVETKKIRRVRLEGIADDENFRRCYGIGSGQCNVFISPEHVETIRFL.

An F-box domain is found at R3–F49.

In Arabidopsis thaliana (Mouse-ear cress), this protein is F-box protein At1g30790.